A 121-amino-acid chain; its full sequence is Large ribosomal subunit protein uL18 (121 aa).

The protein belongs to the universal ribosomal protein uL18 family. As to quaternary structure, part of the 50S ribosomal subunit; part of the 5S rRNA/L5/L18/L25 subcomplex. Contacts the 5S and 23S rRNAs.

Its function is as follows. This is one of the proteins that bind and probably mediate the attachment of the 5S RNA into the large ribosomal subunit, where it forms part of the central protuberance. This Verminephrobacter eiseniae (strain EF01-2) protein is Large ribosomal subunit protein uL18.